The following is a 253-amino-acid chain: MTEPGETTHFGYRDVPLDEKQTLVNDVFHSVAGRYDLMNDLMSGGMHRLWKDVMITTLNPPRDDTPFRLLDVAGGTGDISFRAAKASGAGFHSTVCDINTDMLEVGRQRAVERNLDDKVDFVEGNAESLQFDDRSFDAYTIAFGIRNVPRIDLALKEAYRVLKPGSRFLCLEFSSVDVPGLSKLYDLFSFKVIPEIGRVVTGDADSYQYLVESIRKFPKPYDFAEMMRDAGFARANWQVMSGGIVALHSGWRL.

Residues threonine 76, aspartate 97, and 125–126 (NA) each bind S-adenosyl-L-methionine.

The protein belongs to the class I-like SAM-binding methyltransferase superfamily. MenG/UbiE family.

It carries out the reaction a 2-demethylmenaquinol + S-adenosyl-L-methionine = a menaquinol + S-adenosyl-L-homocysteine + H(+). The catalysed reaction is a 2-methoxy-6-(all-trans-polyprenyl)benzene-1,4-diol + S-adenosyl-L-methionine = a 5-methoxy-2-methyl-3-(all-trans-polyprenyl)benzene-1,4-diol + S-adenosyl-L-homocysteine + H(+). The protein operates within quinol/quinone metabolism; menaquinone biosynthesis; menaquinol from 1,4-dihydroxy-2-naphthoate: step 2/2. Its pathway is cofactor biosynthesis; ubiquinone biosynthesis. Its function is as follows. Methyltransferase required for the conversion of demethylmenaquinol (DMKH2) to menaquinol (MKH2) and the conversion of 2-polyprenyl-6-methoxy-1,4-benzoquinol (DDMQH2) to 2-polyprenyl-3-methyl-6-methoxy-1,4-benzoquinol (DMQH2). This Rhodopseudomonas palustris (strain ATCC BAA-98 / CGA009) protein is Ubiquinone/menaquinone biosynthesis C-methyltransferase UbiE.